A 1145-amino-acid polypeptide reads, in one-letter code: Cation channel sperm-associated auxiliary subunit gamma 2 (1145 aa).

The first 38 residues, 1–38 (MVSRPAMSPVSPVWPRKPNLWAFWVLRLVLLLSLKSWA), serve as a signal peptide directing secretion. The Extracellular segment spans residues 39-1061 (EDALQHCTWL…IHGLPLSSKR (1023 aa)). Disulfide bonds link cysteine 45–cysteine 106 and cysteine 160–cysteine 166. N-linked (GlcNAc...) asparagine glycosylation is present at asparagine 103. The N-linked (GlcNAc...) asparagine glycan is linked to asparagine 178. Cysteine 289 and cysteine 344 are oxidised to a cystine. N-linked (GlcNAc...) asparagine glycans are attached at residues asparagine 356, asparagine 402, asparagine 672, and asparagine 743. 6 disulfides stabilise this stretch: cysteine 395–cysteine 403, cysteine 634–cysteine 856, cysteine 802–cysteine 830, cysteine 878–cysteine 1042, cysteine 905–cysteine 914, and cysteine 1006–cysteine 1012. An N-linked (GlcNAc...) asparagine glycan is attached at asparagine 1038. Residues 1062–1083 (TSFIVMVSTSFFIALVVFYILF) traverse the membrane as a helical segment. Residues 1084 to 1145 (CLVWPHIVKA…KEDNVQAKTA (62 aa)) are Cytoplasmic-facing.

The protein belongs to the CATSPERG family. In terms of assembly, component of the CatSper complex or CatSpermasome composed of the core pore-forming members CATSPER1, CATSPER2, CATSPER3 and CATSPER4 as well as auxiliary members CATSPERB, CATSPERG2, CATSPERD, CATSPERE, CATSPERZ, C2CD6/CATSPERT, SLCO6C1, TMEM249, TMEM262 and EFCAB9. HSPA1 may be an additional auxiliary complex member. The core complex members CATSPER1, CATSPER2, CATSPER3 and CATSPER4 form a heterotetrameric channel. The auxiliary CATSPERB, CATSPERG2, CATSPERD and CATSPERE subunits form a pavilion-like structure over the pore which stabilizes the complex through interactions with CATSPER4, CATSPER3, CATSPER1 and CATSPER2 respectively. SLCO6C1 interacts with CATSPERE and TMEM262/CATSPERH interacts with CATSPERB, further stabilizing the complex. C2CD6/CATSPERT interacts at least with CATSPERD and is required for targeting the CatSper complex in the flagellar membrane. As to expression, testis-specific. Specifically expressed in the principal piece of the sperm tail (at protein level). Expressed in spermatocytes and spermatids within the seminiferous tubule but not in interstitial cells.

It localises to the cell projection. Its subcellular location is the cilium. It is found in the flagellum membrane. Functionally, auxiliary component of the CatSper complex, a complex involved in sperm cell hyperactivation. Sperm cell hyperactivation is needed for sperm motility which is essential late in the preparation of sperm for fertilization. In Mus musculus (Mouse), this protein is Cation channel sperm-associated auxiliary subunit gamma 2.